We begin with the raw amino-acid sequence, 306 residues long: Homeobox protein HMX3 (306 aa).

The segment at 95-181 is disordered; it reads HTPRTEVPDK…DKKPCRKKKT (87 aa). 2 stretches are compositionally biased toward basic and acidic residues: residues 117–143 and 153–174; these read GERD…KSPE and EEGK…PDKK. The homeobox DNA-binding region spans 178 to 237; it reads KKKTRTVFSRSQVFQLESTFDMKRYLSSSERAGLAASLHLTETQVKIWFQNRRNKWKRQL.

This sequence belongs to the HMX homeobox family.

The protein localises to the nucleus. Transcription factor involved in specification of neuronal cell types and which is required for inner ear and hypothalamus development. Binds to the 5'-CAAGTG-3' core sequence. May act as a stage-specific inhibitor of anf1 in the anterior neural plate during the development. The protein is Homeobox protein HMX3 (hmx3) of Xenopus laevis (African clawed frog).